The following is a 246-amino-acid chain: MRVGIIGCSGRMGTLLSSLLRSSNRFTLGPGFSRQSPYSLDSVIESNDVLVDFSSSSFSEELLIALLSNPKPLIFATTKPEPSYSVDEKLQRLAAYVPVVVCPNTSLGAYVQKRLVGLLARVFDDRYDIRISEVHHREKKDPVSGTAKELASILCHTKQEAWQQEYSIGSRCHSVKNIELHVSRVGNISGEHEVAFISDKEHISIHHKVFSRAVFAEGALRILDWLIDESPPPGCYGPEVGLKVSM.

7-12 (GCSGRM) contributes to the NAD(+) binding site. Arg34 provides a ligand contact to NADP(+). Residues 76–78 (ATT) and 102–105 (CPNT) contribute to the NAD(+) site. The Proton donor/acceptor role is filled by His135. (S)-2,3,4,5-tetrahydrodipicolinate is bound at residue His136. Catalysis depends on Lys139, which acts as the Proton donor. (S)-2,3,4,5-tetrahydrodipicolinate is bound at residue 145 to 146 (GT).

This sequence belongs to the DapB family.

Its subcellular location is the cytoplasm. The enzyme catalyses (S)-2,3,4,5-tetrahydrodipicolinate + NAD(+) + H2O = (2S,4S)-4-hydroxy-2,3,4,5-tetrahydrodipicolinate + NADH + H(+). The catalysed reaction is (S)-2,3,4,5-tetrahydrodipicolinate + NADP(+) + H2O = (2S,4S)-4-hydroxy-2,3,4,5-tetrahydrodipicolinate + NADPH + H(+). Its pathway is amino-acid biosynthesis; L-lysine biosynthesis via DAP pathway; (S)-tetrahydrodipicolinate from L-aspartate: step 4/4. In terms of biological role, catalyzes the conversion of 4-hydroxy-tetrahydrodipicolinate (HTPA) to tetrahydrodipicolinate. This chain is 4-hydroxy-tetrahydrodipicolinate reductase, found in Chlamydia abortus (strain DSM 27085 / S26/3) (Chlamydophila abortus).